A 211-amino-acid chain; its full sequence is Interleukin-6 (211 aa).

Positions 1 to 25 (MNSLSTSTFSPVAFSLGLLLVMATA) are cleaved as a signal peptide. Residues C71 and C77 are joined by a disulfide bond. S80 is modified (phosphoserine). A disulfide bond links C100 and C110.

Belongs to the IL-6 superfamily. As to quaternary structure, component of a hexamer of two molecules each of IL6, IL6R and IL6ST; first binds to IL6R to associate with the signaling subunit IL6ST. Interacts with IL6R (via the N-terminal ectodomain); this interaction may be affected by IL6R-binding with SORL1, hence decreasing IL6 cis signaling. Interacts with SORL1 (via the N-terminal ectodomain); this interaction leads to IL6 internalization and lysosomal degradation. May form a trimeric complex with the soluble SORL1 ectodomain and soluble IL6R receptor; this interaction might stabilize circulating IL6, hence promoting IL6 trans signaling.

Its subcellular location is the secreted. Cytokine with a wide variety of biological functions in immunity, tissue regeneration, and metabolism. Binds to IL6R, then the complex associates to the signaling subunit IL6ST/gp130 to trigger the intracellular IL6-signaling pathway. The interaction with the membrane-bound IL6R and IL6ST stimulates 'classic signaling', whereas the binding of IL6 and soluble IL6R to IL6ST stimulates 'trans-signaling'. Alternatively, 'cluster signaling' occurs when membrane-bound IL6:IL6R complexes on transmitter cells activate IL6ST receptors on neighboring receiver cells. In terms of biological role, IL6 is a potent inducer of the acute phase response. Rapid production of IL6 contributes to host defense during infection and tissue injury, but excessive IL6 synthesis is involved in disease pathology. In the innate immune response, is synthesized by myeloid cells, such as macrophages and dendritic cells, upon recognition of pathogens through toll-like receptors (TLRs) at the site of infection or tissue injury. In the adaptive immune response, is required for the differentiation of B cells into immunoglobulin-secreting cells. Plays a major role in the differentiation of CD4(+) T cell subsets. Essential factor for the development of T follicular helper (Tfh) cells that are required for the induction of germinal-center formation. Required to drive naive CD4(+) T cells to the Th17 lineage. Also required for proliferation of myeloma cells and the survival of plasmablast cells. Functionally, acts as an essential factor in bone homeostasis and on vessels directly or indirectly by induction of VEGF, resulting in increased angiogenesis activity and vascular permeability. Induces, through 'trans-signaling' and synergistically with IL1B and TNF, the production of VEGF. Involved in metabolic controls, is discharged into the bloodstream after muscle contraction increasing lipolysis and improving insulin resistance. 'Trans-signaling' in central nervous system also regulates energy and glucose homeostasis. Mediates, through GLP-1, crosstalk between insulin-sensitive tissues, intestinal L cells and pancreatic islets to adapt to changes in insulin demand. Also acts as a myokine. Plays a protective role during liver injury, being required for maintenance of tissue regeneration. Also has a pivotal role in iron metabolism by regulating HAMP/hepcidin expression upon inflammation or bacterial infection. Through activation of IL6ST-YAP-NOTCH pathway, induces inflammation-induced epithelial regeneration. The polypeptide is Interleukin-6 (IL6) (Lama glama (Llama)).